The primary structure comprises 372 residues: 4-hydroxy-3-methylbut-2-en-1-yl diphosphate synthase (flavodoxin) (372 aa).

Positions 270, 273, 305, and 312 each coordinate [4Fe-4S] cluster.

It belongs to the IspG family. The cofactor is [4Fe-4S] cluster.

It catalyses the reaction (2E)-4-hydroxy-3-methylbut-2-enyl diphosphate + oxidized [flavodoxin] + H2O + 2 H(+) = 2-C-methyl-D-erythritol 2,4-cyclic diphosphate + reduced [flavodoxin]. Its pathway is isoprenoid biosynthesis; isopentenyl diphosphate biosynthesis via DXP pathway; isopentenyl diphosphate from 1-deoxy-D-xylulose 5-phosphate: step 5/6. Its function is as follows. Converts 2C-methyl-D-erythritol 2,4-cyclodiphosphate (ME-2,4cPP) into 1-hydroxy-2-methyl-2-(E)-butenyl 4-diphosphate. The chain is 4-hydroxy-3-methylbut-2-en-1-yl diphosphate synthase (flavodoxin) from Pseudoalteromonas translucida (strain TAC 125).